The chain runs to 1369 residues: Neurofascin (1369 aa).

Residues 1 to 25 form the signal peptide; sequence MVLHSHQLTYAGIAFALCLHHLISA. Topologically, residues 26-1235 are extracellular; it reads IEVPLDSNIQ…NHVDIATQGW (1210 aa). Ig-like C2-type domains follow at residues 42 to 138 and 144 to 231; these read PTIT…LQVS and PKEK…NPYT. 2 cysteine pairs are disulfide-bonded: C64–C119 and C163–C214. N-linked (GlcNAc...) asparagine glycosylation is found at N241, N247, and N323. Ig-like C2-type domains follow at residues 262 to 350, 355 to 442, 448 to 535, and 539 to 626; these read PSFM…ISVR, PYWL…AFVS, PRIL…VRLE, and PTRI…AYLT. 2 disulfides stabilise this stretch: C286–C334 and C376–C426. N427, N464, and N501 each carry an N-linked (GlcNAc...) asparagine glycan. 2 disulfides stabilise this stretch: C470–C519 and C561–C610. Fibronectin type-III domains lie at 645-740, 745-838, 843-945, and 949-1057; these read RPRD…TSGA, NPTG…SGED, APTD…TPEG, and SPRY…TPAS. N-linked (GlcNAc...) asparagine glycosylation is present at N692. Positions 730 to 739 are enriched in polar residues; sequence MPSERYQTSG. The tract at residues 730–753 is disordered; sequence MPSERYQTSGARPEINPTGVQGAG. N-linked (GlcNAc...) asparagine glycosylation is found at N767, N793, N853, N994, and N1009. Residues 1078–1097 are disordered; the sequence is TTATPTTETPPTEIPTTAIP. N-linked (GlcNAc...) asparagine glycosylation is found at N1133, N1150, N1156, and N1171. A Fibronectin type-III 5 domain is found at 1133–1222; sequence NGSSIWDIRA…SYITFTTSSA (90 aa). A helical transmembrane segment spans residues 1236–1256; it reads FIGLMCAIALLVLILLIVCFI. Residues 1257 to 1369 lie on the Cytoplasmic side of the membrane; the sequence is KRSRGGKYPV…SPVNAIYSLA (113 aa). Basic and acidic residues-rich tracts occupy residues 1266–1282 and 1289–1298; these read VRDNKDEHLNPEDKNVE and RSLESDEDNK. The interval 1266-1369 is disordered; sequence VRDNKDEHLN…SPVNAIYSLA (104 aa). Residues 1300–1313 are compositionally biased toward polar residues; it reads LPNSQTSLDGTIKQ.

It belongs to the immunoglobulin superfamily. L1/neurofascin/NgCAM family. Post-translationally, N-glycosylated and O-glycosylated. May be proteolytically cleaved at Arg-636.

It is found in the cell membrane. Its function is as follows. Cell adhesion, ankyrin-binding protein which may be involved in neurite extension, axonal guidance, synaptogenesis, myelination and neuron-glial cell interactions. This is Neurofascin (NFASC) from Gallus gallus (Chicken).